The chain runs to 65 residues: Hirudin-2 (65 aa).

Residues 1–3 form an interaction with thrombin active site region; that stretch reads ITY. 3 disulfides stabilise this stretch: C6/C14, C16/C28, and C22/C39. Residues 39–65 are disordered; the sequence is CVTGEGTPKPQSHNDGDFEEIPEEYLQ. Residue T45 is glycosylated (O-linked (GalNAc...) threonine). An interaction with fibrinogen-binding exosite of thrombin region spans residues 55-65; the sequence is DFEEIPEEYLQ. Over residues 55 to 65 the composition is skewed to acidic residues; the sequence is DFEEIPEEYLQ. Sulfotyrosine is present on Y63.

It belongs to the protease inhibitor I14 (hirudin) family.

The protein resides in the secreted. Functionally, hirudin is a potent thrombin-specific protease inhibitor. It forms a stable non-covalent complex with alpha-thrombin, thereby abolishing its ability to cleave fibrinogen. The chain is Hirudin-2 from Hirudo medicinalis (Medicinal leech).